The following is a 406-amino-acid chain: Succinylornithine transaminase (406 aa).

At K252 the chain carries N6-(pyridoxal phosphate)lysine.

The protein belongs to the class-III pyridoxal-phosphate-dependent aminotransferase family. AstC subfamily. The cofactor is pyridoxal 5'-phosphate.

It carries out the reaction N(2)-succinyl-L-ornithine + 2-oxoglutarate = N-succinyl-L-glutamate 5-semialdehyde + L-glutamate. The protein operates within amino-acid degradation; L-arginine degradation via AST pathway; L-glutamate and succinate from L-arginine: step 3/5. In terms of biological role, catalyzes the transamination of N(2)-succinylornithine and alpha-ketoglutarate into N(2)-succinylglutamate semialdehyde and glutamate. Can also act as an acetylornithine aminotransferase. This is Succinylornithine transaminase from Escherichia coli (strain 55989 / EAEC).